A 215-amino-acid chain; its full sequence is Adenylate kinase (215 aa).

Gly-10–Thr-15 is a binding site for ATP. The tract at residues Ser-30–Val-59 is NMP. Residues Thr-31, Arg-36, Glu-57–Val-59, Gly-85–Arg-88, and Gln-92 each bind AMP. Residues Gly-126–Asp-163 are LID. Arg-127 serves as a coordination point for ATP. Residues Cys-130 and Cys-133 each contribute to the Zn(2+) site. Thr-136 to Tyr-137 is a binding site for ATP. Cys-150 and Asp-153 together coordinate Zn(2+). AMP-binding residues include Arg-160 and Arg-171. ATP is bound at residue Lys-199.

The protein belongs to the adenylate kinase family. Monomer.

It is found in the cytoplasm. The catalysed reaction is AMP + ATP = 2 ADP. The protein operates within purine metabolism; AMP biosynthesis via salvage pathway; AMP from ADP: step 1/1. Its function is as follows. Catalyzes the reversible transfer of the terminal phosphate group between ATP and AMP. Plays an important role in cellular energy homeostasis and in adenine nucleotide metabolism. The chain is Adenylate kinase from Staphylococcus aureus (strain COL).